The chain runs to 86 residues: MANTPQARKRIRRNERRAEINGNRLSRIRTFVKKVETALAGGDKTAAAEALKAAQPELARGVARGVLHKNTVARKMSRLTKRVASL.

The protein belongs to the bacterial ribosomal protein bS20 family.

Binds directly to 16S ribosomal RNA. This Novosphingobium aromaticivorans (strain ATCC 700278 / DSM 12444 / CCUG 56034 / CIP 105152 / NBRC 16084 / F199) protein is Small ribosomal subunit protein bS20.